Reading from the N-terminus, the 699-residue chain is Macoilin-2 (699 aa).

The next 4 helical transmembrane spans lie at 28 to 48, 75 to 95, 120 to 140, and 154 to 174; these read TFLY…DFVL, AFSV…LLFI, VCLP…AIRF, and FAAH…KSYV. 4 disordered regions span residues 219-289, 322-411, 432-451, and 679-699; these read AAAA…SILP, LLKD…PNNQ, LQAS…SLGT, and FMDT…PLKK. 4 N-linked (GlcNAc...) asparagine glycosylation sites follow: N241, N267, N345, and N365. Over residues 257-271 the composition is skewed to basic and acidic residues; it reads LEYREKERGKNESKK. Over residues 329–346 the composition is skewed to low complexity; it reads SSSSSSTSSNSNKNYKNA. A compositionally biased stretch (low complexity) spans 366 to 382; the sequence is GSVPSSSGPSSSASSSS. N690 carries an N-linked (GlcNAc...) asparagine glycan.

Belongs to the macoilin family.

The protein localises to the nucleus membrane. Its subcellular location is the cell projection. It localises to the axon. It is found in the rough endoplasmic reticulum membrane. May play a role in the regulation of neuronal activity. The protein is Macoilin-2 of Danio rerio (Zebrafish).